Here is a 751-residue protein sequence, read N- to C-terminus: Catalase-peroxidase 2 (751 aa).

Residues 1–27 (MFKKTVPLLSAVAIAISFSAGTGVANA) form the signal peptide. The segment at residues 115–238 (WHGAGTYRVQ…LAAVQMGLIY (124 aa)) is a cross-link (tryptophyl-tyrosyl-methioninium (Trp-Tyr) (with M-264)). The active-site Proton acceptor is histidine 116. The segment at residues 238 to 264 (YVNPEGPNGKPDPLLAAKDIRDTFGRM) is a cross-link (tryptophyl-tyrosyl-methioninium (Tyr-Met) (with W-115)). Histidine 279 serves as a coordination point for heme b.

Belongs to the peroxidase family. Peroxidase/catalase subfamily. In terms of assembly, homodimer or homotetramer. The cofactor is heme b. In terms of processing, formation of the three residue Trp-Tyr-Met cross-link is important for the catalase, but not the peroxidase activity of the enzyme.

The catalysed reaction is H2O2 + AH2 = A + 2 H2O. The enzyme catalyses 2 H2O2 = O2 + 2 H2O. Its function is as follows. Bifunctional enzyme with both catalase and broad-spectrum peroxidase activity. The protein is Catalase-peroxidase 2 of Idiomarina loihiensis (strain ATCC BAA-735 / DSM 15497 / L2-TR).